Consider the following 52-residue polypeptide: Large ribosomal subunit protein eL39 (52 aa).

The protein belongs to the eukaryotic ribosomal protein eL39 family. As to quaternary structure, interacts with YIH1.

This is Large ribosomal subunit protein eL39 (RPL39) from Encephalitozoon cuniculi (strain GB-M1) (Microsporidian parasite).